We begin with the raw amino-acid sequence, 245 residues long: Biosynthetic peptidoglycan transglycosylase (245 aa).

The helical transmembrane segment at 20-42 (VYAGSVFAGAWLATQLFYLVQIA) threads the bilayer.

It belongs to the glycosyltransferase 51 family.

The protein resides in the cell inner membrane. The catalysed reaction is [GlcNAc-(1-&gt;4)-Mur2Ac(oyl-L-Ala-gamma-D-Glu-L-Lys-D-Ala-D-Ala)](n)-di-trans,octa-cis-undecaprenyl diphosphate + beta-D-GlcNAc-(1-&gt;4)-Mur2Ac(oyl-L-Ala-gamma-D-Glu-L-Lys-D-Ala-D-Ala)-di-trans,octa-cis-undecaprenyl diphosphate = [GlcNAc-(1-&gt;4)-Mur2Ac(oyl-L-Ala-gamma-D-Glu-L-Lys-D-Ala-D-Ala)](n+1)-di-trans,octa-cis-undecaprenyl diphosphate + di-trans,octa-cis-undecaprenyl diphosphate + H(+). Its pathway is cell wall biogenesis; peptidoglycan biosynthesis. Its function is as follows. Peptidoglycan polymerase that catalyzes glycan chain elongation from lipid-linked precursors. In Burkholderia ambifaria (strain MC40-6), this protein is Biosynthetic peptidoglycan transglycosylase.